The following is a 290-amino-acid chain: Glycine--tRNA ligase alpha subunit (290 aa).

The protein belongs to the class-II aminoacyl-tRNA synthetase family. In terms of assembly, tetramer of two alpha and two beta subunits.

Its subcellular location is the cytoplasm. The catalysed reaction is tRNA(Gly) + glycine + ATP = glycyl-tRNA(Gly) + AMP + diphosphate. This is Glycine--tRNA ligase alpha subunit from Fusobacterium nucleatum subsp. nucleatum (strain ATCC 25586 / DSM 15643 / BCRC 10681 / CIP 101130 / JCM 8532 / KCTC 2640 / LMG 13131 / VPI 4355).